The primary structure comprises 628 residues: 1-deoxy-D-xylulose-5-phosphate synthase (628 aa).

Thiamine diphosphate is bound by residues His-72 and 113–115 (GHS). Asp-144 is a Mg(2+) binding site. Thiamine diphosphate is bound by residues 145 to 146 (GA), Asn-173, Tyr-284, and Glu-363. Asn-173 is a binding site for Mg(2+).

The protein belongs to the transketolase family. DXPS subfamily. In terms of assembly, homodimer. It depends on Mg(2+) as a cofactor. The cofactor is thiamine diphosphate.

The catalysed reaction is D-glyceraldehyde 3-phosphate + pyruvate + H(+) = 1-deoxy-D-xylulose 5-phosphate + CO2. It functions in the pathway metabolic intermediate biosynthesis; 1-deoxy-D-xylulose 5-phosphate biosynthesis; 1-deoxy-D-xylulose 5-phosphate from D-glyceraldehyde 3-phosphate and pyruvate: step 1/1. In terms of biological role, catalyzes the acyloin condensation reaction between C atoms 2 and 3 of pyruvate and glyceraldehyde 3-phosphate to yield 1-deoxy-D-xylulose-5-phosphate (DXP). The sequence is that of 1-deoxy-D-xylulose-5-phosphate synthase from Brevibacillus brevis (strain 47 / JCM 6285 / NBRC 100599).